A 435-amino-acid polypeptide reads, in one-letter code: Phosphomethylpyrimidine synthase (435 aa).

Substrate contacts are provided by residues N67, M96, Y125, H163, 185–187, 226–229, and E265; these read SRG and DGLR. H269 is a Zn(2+) binding site. Y292 serves as a coordination point for substrate. H333 serves as a coordination point for Zn(2+). [4Fe-4S] cluster contacts are provided by C408, C411, and C415.

Belongs to the ThiC family. Requires [4Fe-4S] cluster as cofactor.

It catalyses the reaction 5-amino-1-(5-phospho-beta-D-ribosyl)imidazole + S-adenosyl-L-methionine = 4-amino-2-methyl-5-(phosphooxymethyl)pyrimidine + CO + 5'-deoxyadenosine + formate + L-methionine + 3 H(+). The protein operates within cofactor biosynthesis; thiamine diphosphate biosynthesis. Catalyzes the synthesis of the hydroxymethylpyrimidine phosphate (HMP-P) moiety of thiamine from aminoimidazole ribotide (AIR) in a radical S-adenosyl-L-methionine (SAM)-dependent reaction. The sequence is that of Phosphomethylpyrimidine synthase from Thermus thermophilus (strain ATCC 27634 / DSM 579 / HB8).